Consider the following 3093-residue polypeptide: Intermembrane lipid transfer protein VPS13A (3093 aa).

One can recognise a Chorein N-terminal domain in the interval 3–116; the sequence is FESVVVDVLN…LMEAKQQELK (114 aa). Residues 373–406 form a TPR 1 repeat; that stretch reads LTSKKPPGELLVSLEELEKTLDVLNITIARQQAE. Ser-839 carries the phosphoserine modification. The FFAT signature appears at 842–848; sequence EFFDAPC. Phosphoserine is present on Ser-1416. The 246-residue stretch at 2209–2454 folds into the SHR-BD domain; that stretch reads VAFHSPYWMV…VFYTWADPVG (246 aa). One copy of the TPR 2 repeat lies at 2860–2898; sequence ILGLDVLGNPFGLIREFSEGVEAFFYEPYQGAIQGPEEF. The segment at 2953-3027 is required for lipid droplet localization; the sequence is PAGFREGITR…SSTFQGIKRA (75 aa).

It belongs to the VPS13 family. Interacts (via FFAT motif) with VAPA and VAPB. Interacts with RAB7A. Interacts with XK.

It is found in the mitochondrion outer membrane. The protein resides in the endoplasmic reticulum membrane. It localises to the endosome membrane. The protein localises to the lysosome membrane. Its subcellular location is the lipid droplet. It is found in the golgi apparatus. The protein resides in the cytoplasmic vesicle. It localises to the secretory vesicle. The protein localises to the neuronal dense core vesicle. In terms of biological role, mediates the transfer of lipids between membranes at organelle contact sites. Required for the formation or stabilization of ER-mitochondria contact sites which enable transfer of lipids between the ER and mitochondria. Negatively regulates lipid droplet size and motility. Required for efficient lysosomal protein degradation. The protein is Intermembrane lipid transfer protein VPS13A (VPS13A) of Macaca fascicularis (Crab-eating macaque).